Consider the following 369-residue polypeptide: Chorismate synthase (369 aa).

NADP(+) is bound by residues R48 and R54. FMN-binding positions include 125 to 127 (RSS), 238 to 239 (NA), G278, 293 to 297 (KPTSS), and R319.

This sequence belongs to the chorismate synthase family. As to quaternary structure, homotetramer. It depends on FMNH2 as a cofactor.

The enzyme catalyses 5-O-(1-carboxyvinyl)-3-phosphoshikimate = chorismate + phosphate. Its pathway is metabolic intermediate biosynthesis; chorismate biosynthesis; chorismate from D-erythrose 4-phosphate and phosphoenolpyruvate: step 7/7. Its function is as follows. Catalyzes the anti-1,4-elimination of the C-3 phosphate and the C-6 proR hydrogen from 5-enolpyruvylshikimate-3-phosphate (EPSP) to yield chorismate, which is the branch point compound that serves as the starting substrate for the three terminal pathways of aromatic amino acid biosynthesis. This reaction introduces a second double bond into the aromatic ring system. The chain is Chorismate synthase from Burkholderia mallei (strain ATCC 23344).